The chain runs to 168 residues: Peptide deformylase 1 (168 aa).

Positions 91 and 133 each coordinate Fe cation. Glu134 is an active-site residue. His137 is a binding site for Fe cation.

It belongs to the polypeptide deformylase family. Fe(2+) serves as cofactor.

It carries out the reaction N-terminal N-formyl-L-methionyl-[peptide] + H2O = N-terminal L-methionyl-[peptide] + formate. Its function is as follows. Removes the formyl group from the N-terminal Met of newly synthesized proteins. Requires at least a dipeptide for an efficient rate of reaction. N-terminal L-methionine is a prerequisite for activity but the enzyme has broad specificity at other positions. In Vibrio vulnificus (strain YJ016), this protein is Peptide deformylase 1.